Reading from the N-terminus, the 553-residue chain is MRKIQAKKGLSIECKGWEQEAVLRMLYNNLDTEVAERPEDLVVYGGIGKAARNWEAFEAIEKTLRELESDETMLVQSGKPVAVFKTHEEAPRVLISNSVLVPEWANWDHFNELDKKGLIMYGQMTAGSWIYIGSQGIVQGTYETFAELGNQHFNGDLAGTVTLTAGLGGMGGAQPLAITMNHGVAICVDVDETRVDKRIATKYCDIKTANLDEALKLAEEAKERGEGLSIGLVGNAVDLHQAILEKGFKIDIITDQTSAHDPLNGYVPQGYSVEEAKVLREKDPKKYVELSQASMAKHVELMLEFHKRGAVAFDYGNNIRQVAFNNGVRNAFDFPGFVPAYIRPLFCEGKGPFRFAALSGDPKDIERADEEMRKLFPENEKLLRWLDLAEEKISYQGLPSRIAWLGYGERAKMGLALNRLVRDGEISAPIVIGRDHLDAGSVASPNRETESMKDGSDAVGDWAVLNALINTAAGGSWISFHHGGGVGMGYSLHAGMVVVADGSERAERRLERVLTTDPGMGVARHVDAGYDIAIQTAKEKGIHIPMIDKAGDK.

NAD(+) is bound by residues 45–46, Gln-123, 169–171, Asp-189, Arg-194, 235–236, 256–260, 266–267, Tyr-315, and Gly-485; these read GG, GMG, NA, QTSAH, and YV.

It belongs to the urocanase family. Requires NAD(+) as cofactor.

The protein localises to the cytoplasm. The catalysed reaction is 4-imidazolone-5-propanoate = trans-urocanate + H2O. The protein operates within amino-acid degradation; L-histidine degradation into L-glutamate; N-formimidoyl-L-glutamate from L-histidine: step 2/3. Its function is as follows. Catalyzes the conversion of urocanate to 4-imidazolone-5-propionate. In Staphylococcus aureus (strain MRSA252), this protein is Urocanate hydratase.